The sequence spans 1259 residues: Neural cell adhesion molecule L1 (1259 aa).

A signal peptide spans 1–19; sequence MVMMLWYVLPLLLCSPCLL. The Extracellular portion of the chain corresponds to 20–1122; sequence IQIPDEYKGH…VSTTGSFASE (1103 aa). 6 consecutive Ig-like C2-type domains span residues 35-128, 138-225, 239-327, 332-419, 424-506, and 517-600; these read PVIT…HEIQ, PKET…EPID, PRLL…YYVT, PYWL…AYIY, PARI…NNVT, and TQIT…DEVE. Cystine bridges form between C57–C113 and C157–C208. N-linked (GlcNAc...) asparagine glycans are attached at residues N100, N202, N246, and N293. Cystine bridges form between C263–C311 and C353–C403. 3 N-linked (GlcNAc...) asparagine glycosylation sites follow: N432, N489, and N504. A disulfide bridge connects residues C447 and C496. C538 and C590 are joined by a disulfide. 2 consecutive short sequence motifs (cell attachment site) follow at residues 553–555 and 562–564; these read RGD. Fibronectin type-III domains follow at residues 613 to 711, 716 to 809, 811 to 916, 919 to 1014, and 1016 to 1116; these read PVPH…TPEA, NPVD…SGED, PQVS…PEGV, HPEA…MALF, and KPDF…VSTT. N670 carries an N-linked (GlcNAc...) asparagine glycan. A disordered region spans residues 697-724; it reads GEPSPVSETVVTPEAAPEKNPVDVRGEG. Over residues 712–724 the composition is skewed to basic and acidic residues; that stretch reads APEKNPVDVRGEG. N-linked (GlcNAc...) asparagine glycans are attached at residues N725, N776, N824, N848, N875, N968, N978, N1021, N1029, N1072, and N1106. The chain crosses the membrane as a helical span at residues 1123–1145; the sequence is GWFIAFVSAIILLLLILLILCFI. At 1146–1259 the chain is on the cytoplasmic side; it reads KRSKGGKYSV…SPINPAVALE (114 aa). Phosphoserine is present on residues S1165, R1179, S1180, S1183, S1196, S1245, S1246, and S1250. Disordered regions lie at residues 1182 to 1209 and 1228 to 1259; these read ESDNEEKAFGSSQPSLNGDIKPLGSDDS and IGQYSGKKEKEAAGGNDSSGATSPINPAVALE. Residues 1243-1252 are compositionally biased toward polar residues; sequence NDSSGATSPI.

It belongs to the immunoglobulin superfamily. L1/neurofascin/NgCAM family. Interacts with SHTN1; the interaction occurs in axonal growth cones. Interacts with isoform 2 of BSG. In terms of tissue distribution, isoform 2 is predominantly found in the brain, while isoform 1 is found in the peripheral nervous system.

The protein localises to the cell membrane. It localises to the cell projection. It is found in the growth cone. Its function is as follows. Neural cell adhesion molecule involved in the dynamics of cell adhesion and in the generation of transmembrane signals at tyrosine kinase receptors. During brain development, critical in multiple processes, including neuronal migration, axonal growth and fasciculation, and synaptogenesis. In the mature brain, plays a role in the dynamics of neuronal structure and function, including synaptic plasticity. The protein is Neural cell adhesion molecule L1 (L1cam) of Rattus norvegicus (Rat).